The sequence spans 416 residues: D-amino acid dehydrogenase (416 aa).

Position 3–17 (3–17) interacts with FAD; the sequence is VIVLGAGIIGVTSAY.

Belongs to the DadA oxidoreductase family. Requires FAD as cofactor.

The enzyme catalyses a D-alpha-amino acid + A + H2O = a 2-oxocarboxylate + AH2 + NH4(+). The protein operates within amino-acid degradation; D-alanine degradation; NH(3) and pyruvate from D-alanine: step 1/1. Oxidative deamination of D-amino acids. The polypeptide is D-amino acid dehydrogenase (Sinorhizobium medicae (strain WSM419) (Ensifer medicae)).